Here is a 132-residue protein sequence, read N- to C-terminus: Agouti-signaling protein (132 aa).

Residues 1 to 22 (MDVTRLLLATLLVFLCFFTAYS) form the signal peptide. The N-linked (GlcNAc...) asparagine glycan is linked to N39. A compositionally biased stretch (basic and acidic residues) spans 61-79 (EISRKEAEKKRSSKKEASM). The segment at 61-87 (EISRKEAEKKRSSKKEASMKKVARPRT) is disordered. Cystine bridges form between C93–C108, C100–C114, C107–C125, C111–C132, and C116–C123. In terms of domain architecture, Agouti spans 93–132 (CVATRDSCKPPAPACCDPCASCQCRFFRSACSCRVLSLNC).

The protein resides in the secreted. Involved in the regulation of melanogenesis. The binding of ASP to MC1R precludes alpha-MSH initiated signaling and thus blocks production of cAMP, leading to a down-regulation of eumelanogenesis (brown/black pigment) and thus increasing synthesis of pheomelanin (yellow/red pigment). The protein is Agouti-signaling protein (ASIP) of Macaca fascicularis (Crab-eating macaque).